We begin with the raw amino-acid sequence, 88 residues long: FXYD domain-containing ion transport regulator 4 (88 aa).

Positions 1 to 20 (MEEITCAFLLLLAGLPALEA) are cleaved as a signal peptide. The Extracellular portion of the chain corresponds to 21 to 38 (SDPVDKDSPFYYDWESLQ). The chain crosses the membrane as a helical span at residues 39–59 (LGGLIFGGLLCIAGIAMALSG). At 60–88 (KCKCRRTHKPSSLPGKATPLIIPGSANTC) the chain is on the cytoplasmic side.

Belongs to the FXYD family. As to quaternary structure, regulatory subunit of the sodium/potassium-transporting ATPase which is composed of a catalytic alpha subunit, a non-catalytic beta subunit and a regulatory subunit. The regulatory subunit, a member of the FXYD protein family, modulates the enzymatic activity in a tissue- and isoform-specific way by changing affinities of the Na+/K+-ATPase toward Na(+), K(+) or ATP.

The protein localises to the cell membrane. It localises to the basolateral cell membrane. In terms of biological role, associates with and regulates the activity of the sodium/potassium-transporting ATPase (NKA) which catalyzes the hydrolysis of ATP coupled with the exchange of Na(+) and K(+) ions across the plasma membrane. Increases the apparent affinity of the transporter for Na(+) and increases NKA activity. The protein is FXYD domain-containing ion transport regulator 4 (Fxyd4) of Mus musculus (Mouse).